A 103-amino-acid chain; its full sequence is Salivary thrombin inhibitor anophelin (103 aa).

A signal peptide spans 1–21 (MASKLFVLAFLCLALVVVVQS). The interval 24–103 (QYARGDVPTY…PAASSSESDE (80 aa)) is disordered. Positions 56–68 (EEFDPSLLEEHAD) are blocks exosite I of host thrombin. The interval 74–77 (DPGR) is blocks active site cleft of host thrombin in a reverse direction compared to substrates. Low complexity predominate over residues 91–103 (ASAPAASSSESDE).

It belongs to the anophelin family. As to quaternary structure, interacts with human F2 (thrombin); the interaction results in thrombin inhibition. Female salivary gland (at protein level). Not detected in female midgut, head, carcass and male tissues (at protein level).

Its subcellular location is the secreted. Increasing concentration of NaCl decreases affinity for thrombin. Its function is as follows. Salivary protein with anticoagulant activity that inhibits host thrombin (F2); binds to the proteinase in a reverse orientation (opposite to substrates). The sequence is that of Salivary thrombin inhibitor anophelin from Anopheles gambiae (African malaria mosquito).